The primary structure comprises 316 residues: Protoheme IX farnesyltransferase (316 aa).

Residues 1 to 21 (MAKSQALGNAPLTSTVAENAT) are disordered. Over residues 11 to 21 (PLTSTVAENAT) the composition is skewed to polar residues. Transmembrane regions (helical) follow at residues 42-62 (VVAMLLLTALVGMCLAVPGIP), 67-87 (VILGLIGIGFQSAAAAAFNHV), 115-135 (VVFASTLMVMGFVILLELNAL), 136-156 (TAWLTMASLVGYAVVYTVWLK), 163-183 (IVIGGIAGAAPPLLGWTAVTG), 189-209 (ALLLVMLVFTWTPPHFWALAI), 235-255 (MVLLYTVMLFIVGLLPWLTGM), 256-276 (SGGVYLVGSSLLNLGFIGYAL), and 295-315 (IWHLLALFVVLLGDHWITSLM).

The protein belongs to the UbiA prenyltransferase family. Protoheme IX farnesyltransferase subfamily.

The protein resides in the cell inner membrane. It carries out the reaction heme b + (2E,6E)-farnesyl diphosphate + H2O = Fe(II)-heme o + diphosphate. Its pathway is porphyrin-containing compound metabolism; heme O biosynthesis; heme O from protoheme: step 1/1. Functionally, converts heme B (protoheme IX) to heme O by substitution of the vinyl group on carbon 2 of heme B porphyrin ring with a hydroxyethyl farnesyl side group. This is Protoheme IX farnesyltransferase from Photobacterium profundum (strain SS9).